A 448-amino-acid chain; its full sequence is Trigger factor (448 aa).

The region spanning 167 to 253 is the PPIase FKBP-type domain; sequence GSIVRVDFVE…VKDIKRRDIP (87 aa).

It belongs to the FKBP-type PPIase family. Tig subfamily.

It localises to the cytoplasm. The catalysed reaction is [protein]-peptidylproline (omega=180) = [protein]-peptidylproline (omega=0). Functionally, involved in protein export. Acts as a chaperone by maintaining the newly synthesized protein in an open conformation. Functions as a peptidyl-prolyl cis-trans isomerase. The chain is Trigger factor from Borrelia duttonii (strain Ly).